The following is a 359-amino-acid chain: Lipopolysaccharide 1,6-galactosyltransferase (359 aa).

UDP is bound by residues Q242 and E274.

It belongs to the glycosyltransferase group 1 family. Glycosyltransferase 4 subfamily.

It catalyses the reaction alpha-D-Glc-(1-&gt;3)-[L-alpha-D-Hep-(1-&gt;7)]-4-O-PO3(2-)-L-alpha-D-Hep-(1-&gt;3)-4-O-PO3(2-)-L-alpha-D-Hep-(1-&gt;5)-[alpha-Kdo-(2-&gt;4)]-alpha-Kdo-(2-&gt;6)-lipid A + UDP-alpha-D-galactose = alpha-D-Gal-(1-&gt;6)-alpha-D-Glc-(1-&gt;3)-[L-alpha-D-Hep-(1-&gt;7)]-4-O-PO3(2-)-L-alpha-D-Hep-(1-&gt;3)-4-O-PO3(2-)-L-alpha-D-Hep-(1-&gt;5)-[alpha-Kdo-(2-&gt;4)]-alpha-Kdo-(2-&gt;6)-lipid A + UDP + H(+). The protein operates within bacterial outer membrane biogenesis; LPS core biosynthesis. Its function is as follows. Galactosyltransferase involved in the biosynthesis of the core oligosaccharide region of lipopolysaccharide (LPS). Catalyzes the addition of galactose from UDP-galactose to the first glucose residue of the LPS outer core. Cannot use other sugar donors, such as UDP-glucose, UDP-glucuronic acid, UDP-galacuronic acid, GDP-mannose, ADP-glucose and GDP-glucose. In the absence of a lipid acceptor, can hydrolyze UDP-galactose to UDP and galactose. In Escherichia coli (strain K12), this protein is Lipopolysaccharide 1,6-galactosyltransferase.